We begin with the raw amino-acid sequence, 385 residues long: Non-structural maintenance of chromosomes element 4 homolog A (385 aa).

The tract at residues 1 to 69 (MSGDSSGRGP…PSDSGDEMMD (69 aa)) is disordered. Composition is skewed to basic and acidic residues over residues 10-21 (PEGRGRGRDPHR) and 42-55 (SARE…RPSL). Acidic residues predominate over residues 56–68 (EDTEPSDSGDEMM). Thr-345 is subject to Phosphothreonine. Position 377 is a phosphoserine (Ser-377).

This sequence belongs to the NSE4 family. Component of the SMC5-SMC6 complex which consists at least of SMC5, SMC6, NSMCE2, NSMCE1, NSMCE4A or EID3 and NSMCE3. NSMCE1, NSMCE4A or EID3 and NSMCE3 probably form a subcomplex that bridges the head domains of the SMC5:SMC6 heterodimer. Interacts with NSMCE3.

The protein resides in the nucleus. The protein localises to the chromosome. It is found in the telomere. In terms of biological role, component of the SMC5-SMC6 complex, a complex involved in DNA double-strand breaks by homologous recombination. The complex may promote sister chromatid homologous recombination by recruiting the SMC1-SMC3 cohesin complex to double-strand breaks. The complex is required for telomere maintenance via recombination in ALT (alternative lengthening of telomeres) cell lines and mediates sumoylation of shelterin complex (telosome) components which is proposed to lead to shelterin complex disassembly in ALT-associated PML bodies (APBs). Is involved in positive regulation of response to DNA damage stimulus. The sequence is that of Non-structural maintenance of chromosomes element 4 homolog A (NSMCE4A) from Homo sapiens (Human).